A 325-amino-acid chain; its full sequence is Quinolinate synthase (325 aa).

Histidine 41 and serine 58 together coordinate iminosuccinate. Cysteine 103 is a [4Fe-4S] cluster binding site. Iminosuccinate-binding positions include 129–131 (YIN) and serine 146. Residue cysteine 189 coordinates [4Fe-4S] cluster. Iminosuccinate is bound by residues 215-217 (HPE) and threonine 232. Cysteine 282 provides a ligand contact to [4Fe-4S] cluster.

This sequence belongs to the quinolinate synthase family. Type 2 subfamily. [4Fe-4S] cluster is required as a cofactor.

The protein resides in the cytoplasm. The enzyme catalyses iminosuccinate + dihydroxyacetone phosphate = quinolinate + phosphate + 2 H2O + H(+). Its pathway is cofactor biosynthesis; NAD(+) biosynthesis; quinolinate from iminoaspartate: step 1/1. Its function is as follows. Catalyzes the condensation of iminoaspartate with dihydroxyacetone phosphate to form quinolinate. The sequence is that of Quinolinate synthase from Rippkaea orientalis (strain PCC 8801 / RF-1) (Cyanothece sp. (strain PCC 8801)).